The chain runs to 292 residues: Glutamyl-Q tRNA(Asp) synthetase (292 aa).

Residues 9–13 (RFAPS) and E45 contribute to the L-glutamate site. A 'HIGH' region motif is present at residues 12–22 (PSPSGPLHAGS). Positions 99, 101, 121, and 125 each coordinate Zn(2+). L-glutamate-binding residues include Y184 and R202. The short motif at 240–244 (KLSKQ) is the 'KMSKS' region element. Position 243 (K243) interacts with ATP.

It belongs to the class-I aminoacyl-tRNA synthetase family. GluQ subfamily. It depends on Zn(2+) as a cofactor.

Catalyzes the tRNA-independent activation of glutamate in presence of ATP and the subsequent transfer of glutamate onto a tRNA(Asp). Glutamate is transferred on the 2-amino-5-(4,5-dihydroxy-2-cyclopenten-1-yl) moiety of the queuosine in the wobble position of the QUC anticodon. This chain is Glutamyl-Q tRNA(Asp) synthetase, found in Verminephrobacter eiseniae (strain EF01-2).